We begin with the raw amino-acid sequence, 729 residues long: Kinesin-like protein KAR3 (729 aa).

The interval 1–48 is disordered; that stretch reads MESLPRTPTKGRSTQHLSTPSPKNDILAMNGHKRRNTTTPPPKHTLLK. The tract at residues 1 to 109 is globular; that stretch reads MESLPRTPTK…ENVNELNRTQ (109 aa). Residues 10–22 show a composition bias toward polar residues; sequence KGRSTQHLSTPSP. Positions 110-357 form a coiled coil; it reads AILFEKKATL…LEEYIKDTEL (248 aa). Residues N386, R388, R392, E454, G477, S478, G479, K480, T481, F482, E554, K579, and T694 each coordinate ATP. Residues 386 to 723 enclose the Kinesin motor domain; that stretch reads NIRVYCRIRP…LRFASKVNST (338 aa).

Belongs to the TRAFAC class myosin-kinesin ATPase superfamily. Kinesin family. NCD subfamily. As to quaternary structure, interacts with CIK1; the interaction is direct. Interacts with VIK1; the interaction is direct.

It localises to the cytoplasm. The protein localises to the cytoskeleton. It is found in the microtubule organizing center. The protein resides in the spindle pole body. Its subcellular location is the nucleus. It localises to the chromosome. The protein localises to the spindle. It carries out the reaction ATP + H2O = ADP + phosphate + H(+). The catalysed reaction is ATP + H2O + a kinesin associated with a microtubule at position (n) = ADP + phosphate + a kinesin associated with a microtubule at position (n-1, toward the minus end).. Functionally, minus end-directed microtubule (MT) motor involved in spindle midzone assembly, poleward transport of newly captured kinetochores along the lateral side of MTs, karyogamy (nuclear fusion) during mating, and with an essential function in meiosis I. Functions together with the accessory proteins CIK1 or VIK1. Drives the poleward transport of newly captured kinetochores along the lateral side of MTs, both during S-phase and during M-phase. To contribute to spindle midzone assembly during mitotic metaphase, the nuclear KAR3-CIK1 motor cross-links anti-parallel microtubules to align them on the spindle axis; as the motor travels polewards splayed microtubules are pulled into alignment. During the karyogamy (nuclear fusion) step of mating, KAR3-CIK1 cross-links antiparallel cytoplasmic microtubules emanating from the spindle pole bodies of mating partners; the motor activity of KAR3 creates the force that pulls the nuclei together by sliding cross-linked microtubules past one another. KAR3-CIK1 promotes microtubule shortening predominantly from the microtubule plus-end. Together with cytoplasmic VIK1, may act to stabilize microtubules. Requires accessory protein VIK1 for spindle pole body localization and to allow the CIN8 and KIP1 motors to generate outwardly directed spindle forces. Essential during meiosis I. The ATPase activity is stimulated by microtubule-binding. The polypeptide is Kinesin-like protein KAR3 (KAR3) (Saccharomyces cerevisiae (strain ATCC 204508 / S288c) (Baker's yeast)).